Reading from the N-terminus, the 301-residue chain is Coiled-coil domain-containing protein 69-B (301 aa).

Residues 1-43 are disordered; that stretch reads MGSKTSKMCCPQLRKKKRQKAHKEGPSSQELNDLNAKSQGPNE. Glycine 2 carries N-myristoyl glycine lipidation. Residues 26-41 are compositionally biased toward polar residues; it reads PSSQELNDLNAKSQGP. 2 coiled-coil regions span residues 42–167 and 213–281; these read NELL…SILS and KSTM…NLYR.

Belongs to the CCDC69 family.

The protein localises to the cytoplasm. The protein resides in the cytoskeleton. Its subcellular location is the spindle. It is found in the midbody. Its function is as follows. May act as a scaffold to regulate the recruitment and assembly of spindle midzone components. This chain is Coiled-coil domain-containing protein 69-B (ccdc69-b), found in Xenopus laevis (African clawed frog).